Consider the following 541-residue polypeptide: AT-rich interactive domain-containing protein 3A (541 aa).

The interval 17–172 is disordered; that stretch reads RLQQELEARQ…KHPNPQAFPT (156 aa). Low complexity predominate over residues 55–73; sequence LKIQRAQAAALAAMRAAAA. The span at 84–102 shows a compositional bias: acidic residues; the sequence is SDEEEEDGESMASDEEDEK. Residues 103-112 show a composition bias toward basic and acidic residues; it reads ERDGESERYP. The span at 115–144 shows a compositional bias: acidic residues; the sequence is GSEEEDLKGKWDEDDFEDEGEEDDYEDMEE. The 93-residue stretch at 212 to 304 folds into the ARID domain; the sequence is DPKRKEFLDD…YLYPYECEKR (93 aa). The 95-residue stretch at 407–501 folds into the REKLES domain; that stretch reads AALEQLREKL…GVLFAQPPTS (95 aa). The segment at 408 to 450 is important for nuclear localization; that stretch reads ALEQLREKLESGEPPEKKMALGTEEQQRLQRAIQHNLLAMTAQ. Residues 452–473 form a homodimerization region; that stretch reads PMNIRINSQAEGRQDSAVNLTT. The segment at 497–504 is important for cytoplasmic localization; the sequence is QPPTSASG. The segment at 499-541 is disordered; it reads PTSASGTSKGSSNRTGSIGGGSSTSQAAPPPAPSAPTSNNPSP.

In terms of assembly, homodimer.

The protein localises to the nucleus. It is found in the cytoplasm. In terms of biological role, transcription factor required for smad1 and smad2-mediated responses to TGFbeta during mesoderm induction. The protein is AT-rich interactive domain-containing protein 3A (arid3a) of Xenopus tropicalis (Western clawed frog).